We begin with the raw amino-acid sequence, 294 residues long: tRNA pseudouridine synthase A (294 aa).

D64 serves as the catalytic Nucleophile. Residue Y122 participates in substrate binding.

Belongs to the tRNA pseudouridine synthase TruA family. Homodimer.

The catalysed reaction is uridine(38/39/40) in tRNA = pseudouridine(38/39/40) in tRNA. Its function is as follows. Formation of pseudouridine at positions 38, 39 and 40 in the anticodon stem and loop of transfer RNAs. The chain is tRNA pseudouridine synthase A from Synechococcus sp. (strain ATCC 27144 / PCC 6301 / SAUG 1402/1) (Anacystis nidulans).